The sequence spans 242 residues: Protein GrpE (242 aa).

2 disordered regions span residues 1-75 (MSDD…DDEL) and 93-136 (VADL…QQIK). The segment covering 23–37 (DAESSAAEDASAADD) has biased composition (low complexity). The segment covering 38–49 (AAPEESTGDEQA) has biased composition (acidic residues). Over residues 50–64 (GETTAESSDAESVTV) the composition is skewed to polar residues. The span at 96–108 (LETERDEAEETAS) shows a compositional bias: acidic residues. Residues 124–133 (YKKRAKKRQQ) show a composition bias toward basic residues.

The protein belongs to the GrpE family. As to quaternary structure, homodimer.

The protein localises to the cytoplasm. In terms of biological role, participates actively in the response to hyperosmotic and heat shock by preventing the aggregation of stress-denatured proteins, in association with DnaK and GrpE. It is the nucleotide exchange factor for DnaK and may function as a thermosensor. Unfolded proteins bind initially to DnaJ; upon interaction with the DnaJ-bound protein, DnaK hydrolyzes its bound ATP, resulting in the formation of a stable complex. GrpE releases ADP from DnaK; ATP binding to DnaK triggers the release of the substrate protein, thus completing the reaction cycle. Several rounds of ATP-dependent interactions between DnaJ, DnaK and GrpE are required for fully efficient folding. In Haloferax mediterranei (strain ATCC 33500 / DSM 1411 / JCM 8866 / NBRC 14739 / NCIMB 2177 / R-4) (Halobacterium mediterranei), this protein is Protein GrpE.